We begin with the raw amino-acid sequence, 279 residues long: Acyl-[acyl-carrier-protein]--UDP-N-acetylglucosamine O-acyltransferase (279 aa).

It belongs to the transferase hexapeptide repeat family. LpxA subfamily. As to quaternary structure, homotrimer.

It is found in the cytoplasm. It catalyses the reaction a (3R)-hydroxyacyl-[ACP] + UDP-N-acetyl-alpha-D-glucosamine = a UDP-3-O-[(3R)-3-hydroxyacyl]-N-acetyl-alpha-D-glucosamine + holo-[ACP]. It functions in the pathway glycolipid biosynthesis; lipid IV(A) biosynthesis; lipid IV(A) from (3R)-3-hydroxytetradecanoyl-[acyl-carrier-protein] and UDP-N-acetyl-alpha-D-glucosamine: step 1/6. Its function is as follows. Involved in the biosynthesis of lipid A, a phosphorylated glycolipid that anchors the lipopolysaccharide to the outer membrane of the cell. This chain is Acyl-[acyl-carrier-protein]--UDP-N-acetylglucosamine O-acyltransferase, found in Mesorhizobium japonicum (strain LMG 29417 / CECT 9101 / MAFF 303099) (Mesorhizobium loti (strain MAFF 303099)).